The chain runs to 412 residues: Branched-chain alpha-ketoacid dehydrogenase kinase (412 aa).

The transit peptide at 1-30 (MILASVLRSGPGGGLPLRPLLGPALALRAR) directs the protein to the mitochondrion. Phosphoserine is present on S31. The residue at position 52 (S52) is a Phosphoserine; by autocatalysis. The region spanning 159–404 (LDDHKDVVTL…DVYLRLRHID (246 aa)) is the Histidine kinase domain. An N6-acetyllysine mark is found at K192 and K233. Positions 279 and 315 each coordinate ATP. A Mg(2+)-binding site is contributed by N279. V328, D330, and F333 together coordinate K(+). Residues T334 and T335 each coordinate ATP. Phosphoserine is present on residues S356 and S360. Residues H364, G367, and L370 each contribute to the ATP site. G367 lines the K(+) pocket.

The protein belongs to the PDK/BCKDK protein kinase family. In terms of assembly, homodimer. Homotetramer. Dimerizes through interaction of two opposing nucleotide-binding domains. Interacts with E2 component of the branched-chain alpha-ketoacid dehydrogenase (BCKDH) complex. Competes with BCKDK for binding to the E2 component; this interaction is modulated by branched-chain alpha-keto acids. At steady state, BCKDH holoenzyme contains BCKDK and BCKDHA is phosphorylated. In response to high levels of branched-chain alpha-keto acids, the inhibitory BCKDK is replaced by activating PPM1K leading to BCKDHA dephosphorylation and BCAA degradation. Autophosphorylated. As to expression, ubiquitous.

It is found in the mitochondrion matrix. The catalysed reaction is L-seryl-[3-methyl-2-oxobutanoate dehydrogenase] + ATP = O-phospho-L-seryl-[3-methyl-2-oxobutanoate dehydrogenase] + ADP + H(+). It catalyses the reaction L-seryl-[protein] + ATP = O-phospho-L-seryl-[protein] + ADP + H(+). It participates in protein modification. With respect to regulation, allosterically inhibited by certain thiazoles and thiophenes: thiazoles increase interaction with DBT/BCKDH-E2, whereas thiophenes reduce this interaction. Inhibited by 3,6- dichlorobenzo[b]thiophene-2-carboxylic acid (BT2). The ATP binding is mediated by both potassium and magnesium ions. Functionally, serine/threonine-protein kinase component of macronutrients metabolism. Forms a functional kinase and phosphatase pair with PPM1K, serving as a metabolic regulatory node that coordinates branched-chain amino acids (BCAAs) with glucose and lipid metabolism via two distinct phosphoprotein targets: mitochondrial BCKDHA subunit of the branched-chain alpha-ketoacid dehydrogenase (BCKDH) complex and cytosolic ACLY, a lipogenic enzyme of Krebs cycle. Phosphorylates and inactivates mitochondrial BCKDH complex a multisubunit complex consisting of three multimeric components each involved in different steps of BCAA catabolism: E1 composed of BCKDHA and BCKDHB, E2 core composed of DBT monomers, and E3 composed of DLD monomers. Associates with the E2 component of BCKDH complex and phosphorylates BCKDHA on Ser-337, leading to conformational changes that interrupt substrate channeling between E1 and E2 and inactivates the BCKDH complex. Phosphorylates ACLY on Ser-455 in response to changes in cellular carbohydrate abundance such as occurs during fasting to feeding metabolic transition. Refeeding stimulates MLXIPL/ChREBP transcription factor, leading to increased BCKDK to PPM1K expression ratio, phosphorylation and activation of ACLY that ultimately results in the generation of malonyl-CoA and oxaloacetate immediate substrates of de novo lipogenesis and glucogenesis, respectively. Recognizes phosphosites having SxxE/D canonical motif. In Homo sapiens (Human), this protein is Branched-chain alpha-ketoacid dehydrogenase kinase.